We begin with the raw amino-acid sequence, 103 residues long: Large ribosomal subunit protein uL23 (103 aa).

The protein belongs to the universal ribosomal protein uL23 family. Part of the 50S ribosomal subunit. Contacts protein L29, and trigger factor when it is bound to the ribosome.

In terms of biological role, one of the early assembly proteins it binds 23S rRNA. One of the proteins that surrounds the polypeptide exit tunnel on the outside of the ribosome. Forms the main docking site for trigger factor binding to the ribosome. The polypeptide is Large ribosomal subunit protein uL23 (Chlorobium chlorochromatii (strain CaD3)).